Reading from the N-terminus, the 124-residue chain is Small ribosomal subunit protein bS6 (124 aa).

Positions 96–124 (ETGPSPMMKEVQREEAKKAAAAQPAEAQA) are disordered. Residues 114-124 (AAAAQPAEAQA) show a composition bias toward low complexity.

This sequence belongs to the bacterial ribosomal protein bS6 family.

In terms of biological role, binds together with bS18 to 16S ribosomal RNA. The polypeptide is Small ribosomal subunit protein bS6 (Burkholderia orbicola (strain MC0-3)).